The chain runs to 314 residues: (+)-neomenthol dehydrogenase (314 aa).

Valine 13–valine 36 contacts NADP(+). Substrate is bound at residue serine 183. Catalysis depends on tyrosine 239, which acts as the Proton acceptor.

The protein belongs to the short-chain dehydrogenases/reductases (SDR) family. Monomer. In terms of tissue distribution, expressed in flowers and red fruit tissues. Not detected in leaves, stems, roots or green fruits.

The enzyme catalyses (+)-neomenthol + NADP(+) = (1R,4S)-menthone + NADPH + H(+). Its function is as follows. Involved in basal resistance against pathogens. In Capsicum annuum (Capsicum pepper), this protein is (+)-neomenthol dehydrogenase (MNR1).